The primary structure comprises 527 residues: Flavonoid 3',5'-hydroxylase CYP75B138 (527 aa).

A helical membrane pass occupies residues 6 to 26; it reads LDIILFISAIVFLSIYYYNLF. Cys-459 serves as a coordination point for heme.

It belongs to the cytochrome P450 family. Heme is required as a cofactor. As to expression, expressed in young cromes.

The protein resides in the membrane. The catalysed reaction is a 3',5'-unsubstituted flavanone + 2 reduced [NADPH--hemoprotein reductase] + 2 O2 = a 3',5'-dihydroxyflavanone + 2 oxidized [NADPH--hemoprotein reductase] + 2 H2O + 2 H(+). It catalyses the reaction (2S)-naringenin + 2 reduced [NADPH--hemoprotein reductase] + 2 O2 = (2S)-dihydrotricetin + 2 oxidized [NADPH--hemoprotein reductase] + 2 H2O + 2 H(+). The enzyme catalyses (2R,3R)-dihydrokaempferol + 2 reduced [NADPH--hemoprotein reductase] + 2 O2 = (2R,3R)-dihydromyricetin + 2 oxidized [NADPH--hemoprotein reductase] + 2 H2O + 2 H(+). It carries out the reaction kaempferol + 2 reduced [NADPH--hemoprotein reductase] + 2 O2 = myricetin + 2 oxidized [NADPH--hemoprotein reductase] + 2 H2O + 2 H(+). Its pathway is flavonoid metabolism. Functionally, flavonoid 3',5'-hydroxylase that catalyzes the 3'- and 5'-hydroxylation of flavanones, dihydroflavonols and flavonols. Converts narigenin to dihydrotricetin, dihydrokaempferol to dihydromyricetin and kaempferol to myricetin. The sequence is that of Flavonoid 3',5'-hydroxylase CYP75B138 from Crocosmia x crocosmiiflora (Montbretia).